The following is a 264-amino-acid chain: Thymidylate synthase (264 aa).

Arg-21 is a binding site for dUMP. (6R)-5,10-methylene-5,6,7,8-tetrahydrofolate is bound at residue His-51. A dUMP-binding site is contributed by 126-127 (RR). Residue Cys-146 is the Nucleophile of the active site. DUMP-binding positions include 166 to 169 (RSCD), Asn-177, and 207 to 209 (HLY). Asp-169 serves as a coordination point for (6R)-5,10-methylene-5,6,7,8-tetrahydrofolate. Ala-263 lines the (6R)-5,10-methylene-5,6,7,8-tetrahydrofolate pocket.

Belongs to the thymidylate synthase family. Bacterial-type ThyA subfamily. In terms of assembly, homodimer.

It is found in the cytoplasm. It carries out the reaction dUMP + (6R)-5,10-methylene-5,6,7,8-tetrahydrofolate = 7,8-dihydrofolate + dTMP. Its pathway is pyrimidine metabolism; dTTP biosynthesis. Catalyzes the reductive methylation of 2'-deoxyuridine-5'-monophosphate (dUMP) to 2'-deoxythymidine-5'-monophosphate (dTMP) while utilizing 5,10-methylenetetrahydrofolate (mTHF) as the methyl donor and reductant in the reaction, yielding dihydrofolate (DHF) as a by-product. This enzymatic reaction provides an intracellular de novo source of dTMP, an essential precursor for DNA biosynthesis. In Shewanella denitrificans (strain OS217 / ATCC BAA-1090 / DSM 15013), this protein is Thymidylate synthase.